The sequence spans 629 residues: Kelch-like protein 13 (629 aa).

The BTB domain occupies 66 to 135; it reads CDVTLVPGDG…IYTAKLSLNM (70 aa). The BACK domain maps to 170–271; sequence CVEVGRIANT…TPQDLINYVQ (102 aa). Kelch repeat units follow at residues 315–363, 364–415, 416–462, 464–509, 511–561, and 562–610; these read HLVT…VIGN, FLYV…ALKG, HLYA…VYGG, MYIS…TVGD, LYVI…VFEN, and KIYV…TLTV.

Component of the BCR(KLHL9-KLHL13) E3 ubiquitin ligase complex, at least composed of CUL3, KLHL9, KLHL13 and RBX1. Interacts with AURKB.

It functions in the pathway protein modification; protein ubiquitination. Its function is as follows. Substrate-specific adapter of a BCR (BTB-CUL3-RBX1) E3 ubiquitin-protein ligase complex required for mitotic progression and cytokinesis. The BCR(KLHL9-KLHL13) E3 ubiquitin ligase complex mediates the ubiquitination of AURKB and controls the dynamic behavior of AURKB on mitotic chromosomes and thereby coordinates faithful mitotic progression and completion of cytokinesis. This is Kelch-like protein 13 (KLHL13) from Gallus gallus (Chicken).